A 631-amino-acid chain; its full sequence is Phosphomethylpyrimidine synthase (631 aa).

Residues Asn239, Met268, Tyr297, His333, 353–355 (SRG), 394–397 (DGLR), and Glu433 contribute to the substrate site. His437 lines the Zn(2+) pocket. Tyr460 lines the substrate pocket. His501 serves as a coordination point for Zn(2+). The [4Fe-4S] cluster site is built by Cys581, Cys584, and Cys589.

It belongs to the ThiC family. In terms of assembly, homodimer. It depends on [4Fe-4S] cluster as a cofactor.

The catalysed reaction is 5-amino-1-(5-phospho-beta-D-ribosyl)imidazole + S-adenosyl-L-methionine = 4-amino-2-methyl-5-(phosphooxymethyl)pyrimidine + CO + 5'-deoxyadenosine + formate + L-methionine + 3 H(+). Its pathway is cofactor biosynthesis; thiamine diphosphate biosynthesis. In terms of biological role, catalyzes the synthesis of the hydroxymethylpyrimidine phosphate (HMP-P) moiety of thiamine from aminoimidazole ribotide (AIR) in a radical S-adenosyl-L-methionine (SAM)-dependent reaction. The protein is Phosphomethylpyrimidine synthase of Escherichia coli O139:H28 (strain E24377A / ETEC).